A 129-amino-acid polypeptide reads, in one-letter code: Small ribosomal subunit protein uS11 (129 aa).

Residues 109–129 are disordered; that stretch reads VDDTPVPHNGCRPKKKFRKAS. Residues 119–129 show a composition bias toward basic residues; it reads CRPKKKFRKAS.

Belongs to the universal ribosomal protein uS11 family. Part of the 30S ribosomal subunit. Interacts with proteins S7 and S18. Binds to the C-terminus of IF-3; however exactly how IF-3 interacts with the 30S subunit is unclear.

Functionally, located on the upper part of the platform of the 30S subunit, where it bridges several disparate RNA helices of the 16S rRNA. Forms part of the Shine-Dalgarno cleft in the 70S ribosome. This is Small ribosomal subunit protein uS11 (rpsK) from Thermus thermophilus (strain ATCC BAA-163 / DSM 7039 / HB27).